The following is a 617-amino-acid chain: Dihydroxy-acid dehydratase (617 aa).

Mg(2+) is bound at residue D81. C122 serves as a coordination point for [2Fe-2S] cluster. The Mg(2+) site is built by D123 and K124. At K124 the chain carries N6-carboxylysine. [2Fe-2S] cluster is bound at residue C197. E493 serves as a coordination point for Mg(2+). S519 functions as the Proton acceptor in the catalytic mechanism.

Belongs to the IlvD/Edd family. Homodimer. Requires [2Fe-2S] cluster as cofactor. Mg(2+) is required as a cofactor.

It carries out the reaction (2R)-2,3-dihydroxy-3-methylbutanoate = 3-methyl-2-oxobutanoate + H2O. The enzyme catalyses (2R,3R)-2,3-dihydroxy-3-methylpentanoate = (S)-3-methyl-2-oxopentanoate + H2O. The protein operates within amino-acid biosynthesis; L-isoleucine biosynthesis; L-isoleucine from 2-oxobutanoate: step 3/4. It functions in the pathway amino-acid biosynthesis; L-valine biosynthesis; L-valine from pyruvate: step 3/4. Its function is as follows. Functions in the biosynthesis of branched-chain amino acids. Catalyzes the dehydration of (2R,3R)-2,3-dihydroxy-3-methylpentanoate (2,3-dihydroxy-3-methylvalerate) into 2-oxo-3-methylpentanoate (2-oxo-3-methylvalerate) and of (2R)-2,3-dihydroxy-3-methylbutanoate (2,3-dihydroxyisovalerate) into 2-oxo-3-methylbutanoate (2-oxoisovalerate), the penultimate precursor to L-isoleucine and L-valine, respectively. The chain is Dihydroxy-acid dehydratase from Corynebacterium aurimucosum (strain ATCC 700975 / DSM 44827 / CIP 107346 / CN-1) (Corynebacterium nigricans).